Consider the following 274-residue polypeptide: D-aminoacyl-tRNA deacylase (274 aa).

Belongs to the DtdA deacylase family. In terms of assembly, monomer. Requires Zn(2+) as cofactor.

It carries out the reaction a D-aminoacyl-tRNA + H2O = a tRNA + a D-alpha-amino acid + H(+). The enzyme catalyses glycyl-tRNA(Ala) + H2O = tRNA(Ala) + glycine + H(+). In terms of biological role, D-aminoacyl-tRNA deacylase with broad substrate specificity. By recycling D-aminoacyl-tRNA to D-amino acids and free tRNA molecules, this enzyme counteracts the toxicity associated with the formation of D-aminoacyl-tRNA entities in vivo. The protein is D-aminoacyl-tRNA deacylase of Pyrococcus horikoshii (strain ATCC 700860 / DSM 12428 / JCM 9974 / NBRC 100139 / OT-3).